A 370-amino-acid polypeptide reads, in one-letter code: Chorismate synthase (370 aa).

Residue arginine 48 participates in NADP(+) binding. FMN contacts are provided by residues 125-127 (RSS), 241-242 (NA), glycine 285, 300-304 (KPTSS), and arginine 326.

This sequence belongs to the chorismate synthase family. In terms of assembly, homotetramer. FMNH2 is required as a cofactor.

It catalyses the reaction 5-O-(1-carboxyvinyl)-3-phosphoshikimate = chorismate + phosphate. It participates in metabolic intermediate biosynthesis; chorismate biosynthesis; chorismate from D-erythrose 4-phosphate and phosphoenolpyruvate: step 7/7. Catalyzes the anti-1,4-elimination of the C-3 phosphate and the C-6 proR hydrogen from 5-enolpyruvylshikimate-3-phosphate (EPSP) to yield chorismate, which is the branch point compound that serves as the starting substrate for the three terminal pathways of aromatic amino acid biosynthesis. This reaction introduces a second double bond into the aromatic ring system. In Jannaschia sp. (strain CCS1), this protein is Chorismate synthase.